Reading from the N-terminus, the 289-residue chain is Phosphatidylglycerol--prolipoprotein diacylglyceryl transferase (289 aa).

The next 7 helical transmembrane spans lie at 23–43, 61–81, 99–119, 125–145, 199–219, 226–246, and 259–279; these read ALHW…WLAV, LLYM…VLFY, GGMS…WFAH, FFQV…AGRL, SQLY…NLFI, GSVS…TEFF, and LFSM…LMMV. Arg144 is a binding site for a 1,2-diacyl-sn-glycero-3-phospho-(1'-sn-glycerol).

It belongs to the Lgt family.

Its subcellular location is the cell inner membrane. The enzyme catalyses L-cysteinyl-[prolipoprotein] + a 1,2-diacyl-sn-glycero-3-phospho-(1'-sn-glycerol) = an S-1,2-diacyl-sn-glyceryl-L-cysteinyl-[prolipoprotein] + sn-glycerol 1-phosphate + H(+). It participates in protein modification; lipoprotein biosynthesis (diacylglyceryl transfer). Catalyzes the transfer of the diacylglyceryl group from phosphatidylglycerol to the sulfhydryl group of the N-terminal cysteine of a prolipoprotein, the first step in the formation of mature lipoproteins. The chain is Phosphatidylglycerol--prolipoprotein diacylglyceryl transferase from Pectobacterium atrosepticum (strain SCRI 1043 / ATCC BAA-672) (Erwinia carotovora subsp. atroseptica).